A 540-amino-acid polypeptide reads, in one-letter code: MGAVWLSHVSQLVCGCYLIEQSSCVLRTFHWSLSHSLNFTLTMKPKRRRLGVKMESFSLATPNMCFRKVSSELDSSFNGENVVCGLELEEKTAGDRNRIHFLEERNEETLSKRLRKLSRLDKVRSALELFDSMRFLGLQPNAHACNSFLSCLLRNGDIQKAFTVFEFMRKKENVTGHTYSLMLKAVAEVKGCESALRMFRELEREPKRRSCFDVVLYNTAISLCGRINNVYETERIWRVMKGDGHIGTEITYSLLVSIFVRCGRSELALDVYDEMVNNKISLREDAMYAMISACTKEEKWDLALKIFQSMLKKGMKPNLVACNTLINSLGKAGKVGLVFKVYSVLKSLGHKPDEYTWNALLTALYKANRYEDVLQLFDMIRSENLCCLNEYLYNTAMVSCQKLGYWEKAVKLLYEMEGSGLTVSTSSYNLVISACEKSRKSKVALLVYEHMAQRDCKPNTFTYLSLVRSCIWGSLWDEVEDILKKVEPDVSLYNAAIHGMCLRREFKFAKELYVKMREMGLEPDGKTRAMMLQNLKKHQK.

12 PPR repeats span residues 106 to 140, 141 to 175, 177 to 205, 213 to 247, 248 to 282, 283 to 317, 318 to 352, 353 to 387, 389 to 423, 424 to 458, 459 to 487, and 489 to 523; these read NEETLSKRLRKLSRLDKVRSALELFDSMRFLGLQP, NAHACNSFLSCLLRNGDIQKAFTVFEFMRKKENVT, HTYSLMLKAVAEVKGCESALRMFRELERE, DVVLYNTAISLCGRINNVYETERIWRVMKGDGHIG, TEITYSLLVSIFVRCGRSELALDVYDEMVNNKISL, REDAMYAMISACTKEEKWDLALKIFQSMLKKGMKP, NLVACNTLINSLGKAGKVGLVFKVYSVLKSLGHKP, DEYTWNALLTALYKANRYEDVLQLFDMIRSENLCC, NEYLYNTAMVSCQKLGYWEKAVKLLYEMEGSGLTV, STSSYNLVISACEKSRKSKVALLVYEHMAQRDCKP, NTFTYLSLVRSCIWGSLWDEVEDILKKVE, and DVSLYNAAIHGMCLRREFKFAKELYVKMREMGLEP.

This sequence belongs to the PPR family. P subfamily.

The chain is Pentatricopeptide repeat-containing protein At3g29290 (EMB2076) from Arabidopsis thaliana (Mouse-ear cress).